A 588-amino-acid polypeptide reads, in one-letter code: L-fucose isomerase (588 aa).

Active-site proton acceptor residues include glutamate 335 and aspartate 359. 3 residues coordinate Mn(2+): glutamate 335, aspartate 359, and histidine 525.

The protein belongs to the L-fucose isomerase family. It depends on Mn(2+) as a cofactor.

Its subcellular location is the cytoplasm. The enzyme catalyses L-fucose = L-fuculose. It functions in the pathway carbohydrate degradation; L-fucose degradation; L-lactaldehyde and glycerone phosphate from L-fucose: step 1/3. Converts the aldose L-fucose into the corresponding ketose L-fuculose. The sequence is that of L-fucose isomerase from Streptococcus pneumoniae (strain ATCC 700669 / Spain 23F-1).